The chain runs to 105 residues: Nucleoid-associated protein TTHA1599 (105 aa).

Belongs to the YbaB/EbfC family. In terms of assembly, homodimer.

Its subcellular location is the cytoplasm. It localises to the nucleoid. Functionally, binds to DNA and alters its conformation. May be involved in regulation of gene expression, nucleoid organization and DNA protection. The polypeptide is Nucleoid-associated protein TTHA1599 (Thermus thermophilus (strain ATCC 27634 / DSM 579 / HB8)).